Consider the following 118-residue polypeptide: Myotrophin (118 aa).

Cysteine 2 carries the N-acetylcysteine modification. Residues 2–30 form an ANK 1 repeat; sequence CDKEFMWALKNGDLDEVKDYVAKGEDVNR. Residues lysine 4, lysine 11, and lysine 24 each carry the N6-acetyllysine modification. Phosphothreonine is present on threonine 31. ANK repeat units lie at residues 34 to 66 and 67 to 99; these read GGRKPLHYAADCGQLEILEFLLLKGADINAPDK and HHITPLLSAVYEGHVSCVKLLLSKGADKTVKGP.

This sequence belongs to the myotrophin family. In terms of assembly, interacts with RELA. Interacts with the heterodimer formed by CAPZA1 and CAPZB.

The protein localises to the cytoplasm. It is found in the nucleus. The protein resides in the perinuclear region. Promotes dimerization of NF-kappa-B subunits and regulates NF-kappa-B transcription factor activity. Promotes growth of cardiomyocytes, but not cardiomyocyte proliferation. Promotes cardiac muscle hypertrophy. Plays a role in the regulation of the growth of actin filaments. Inhibits the activity of the F-actin-capping protein complex formed by the CAPZA1 and CAPZB heterodimer. The polypeptide is Myotrophin (MTPN) (Bos taurus (Bovine)).